We begin with the raw amino-acid sequence, 991 residues long: Translation initiation factor IF-2 (991 aa).

Disordered regions lie at residues 53-85 (SHGT…KART), 97-175 (VKRD…EAAE), and 312-395 (GIKG…DRGG). Basic and acidic residues-rich tracts occupy residues 97-113 (VKRD…HDSQ) and 125-175 (ELQR…EAAE). The segment covering 323 to 338 (AAGAPAPGAAPGAAAK) has biased composition (low complexity). The span at 339–349 (PGEKKSVKSEK) shows a compositional bias: basic and acidic residues. Residues 491–658 (PRPPVVTVMG…QVLLQAEVLE (168 aa)) form the tr-type G domain. Positions 500–507 (GHVDHGKT) are G1. 500–507 (GHVDHGKT) contributes to the GTP binding site. The interval 525-529 (GITQH) is G2. A G3 region spans residues 546–549 (DTPG). GTP is bound by residues 546-550 (DTPGH) and 600-603 (NKID). Residues 600–603 (NKID) are G4. The tract at residues 636–638 (SAK) is G5.

The protein belongs to the TRAFAC class translation factor GTPase superfamily. Classic translation factor GTPase family. IF-2 subfamily.

It is found in the cytoplasm. Functionally, one of the essential components for the initiation of protein synthesis. Protects formylmethionyl-tRNA from spontaneous hydrolysis and promotes its binding to the 30S ribosomal subunits. Also involved in the hydrolysis of GTP during the formation of the 70S ribosomal complex. This Leptothrix cholodnii (strain ATCC 51168 / LMG 8142 / SP-6) (Leptothrix discophora (strain SP-6)) protein is Translation initiation factor IF-2.